The following is a 29-amino-acid chain: GLMSTLKGAATNVAVTLLNKLQCKLTGTC.

Residues Cys23 and Cys29 are joined by a disulfide bond.

As to expression, expressed by the skin glands.

The protein resides in the secreted. Antimicrobial peptide. This Pelophylax ridibundus (Marsh frog) protein is Brevinin-2Rc.